The chain runs to 968 residues: RNA polymerase-associated protein RapA (968 aa).

Residues 163–332 (EVGQRFAPRV…FARLRLLDPD (170 aa)) enclose the Helicase ATP-binding domain. Position 176-183 (176-183 (DEVGLGKT)) interacts with ATP. Residues 278-281 (DEAH) carry the DEAH box motif. The Helicase C-terminal domain maps to 491 to 645 (RVDWLIDFLK…TCPTGHILFN (155 aa)).

Belongs to the SNF2/RAD54 helicase family. RapA subfamily. As to quaternary structure, interacts with the RNAP. Has a higher affinity for the core RNAP than for the holoenzyme. Its ATPase activity is stimulated by binding to RNAP.

Its function is as follows. Transcription regulator that activates transcription by stimulating RNA polymerase (RNAP) recycling in case of stress conditions such as supercoiled DNA or high salt concentrations. Probably acts by releasing the RNAP, when it is trapped or immobilized on tightly supercoiled DNA. Does not activate transcription on linear DNA. Probably not involved in DNA repair. The chain is RNA polymerase-associated protein RapA from Shewanella loihica (strain ATCC BAA-1088 / PV-4).